The chain runs to 518 residues: uncharacterized protein (518 aa).

ABC transporter domains follow at residues L4–A260 and L324–L518. Residues G36–S43 and G357–T364 each bind ATP.

This sequence belongs to the ABC transporter superfamily.

This is an uncharacterized protein from Bacillus subtilis (strain 168).